A 204-amino-acid polypeptide reads, in one-letter code: Proteasome subunit beta type-3 (204 aa).

Belongs to the peptidase T1B family. In terms of assembly, the 26S proteasome consists of a 20S proteasome core and two 19S regulatory subunits. The 20S proteasome core is composed of 28 subunits that are arranged in four stacked rings, resulting in a barrel-shaped structure. The two end rings are each formed by seven alpha subunits, and the two central rings are each formed by seven beta subunits. The catalytic chamber with the active sites is on the inside of the barrel.

The protein localises to the cytoplasm. It is found in the nucleus. Its function is as follows. Non-catalytic component of the proteasome, a multicatalytic proteinase complex which is characterized by its ability to cleave peptides with Arg, Phe, Tyr, Leu, and Glu adjacent to the leaving group at neutral or slightly basic pH. The proteasome has an ATP-dependent proteolytic activity. This chain is Proteasome subunit beta type-3 (pbs-3), found in Caenorhabditis elegans.